We begin with the raw amino-acid sequence, 357 residues long: Sorbitol dehydrogenase 1 (357 aa).

C43 is a Zn(2+) binding site. Y49 serves as a coordination point for substrate. H68 and E69 together coordinate Zn(2+). Residue E154 coordinates substrate. NAD(+)-binding positions include D202, K207, 275–277 (VGM), and 299–301 (CFR). The substrate site is built by R301 and Y302.

This sequence belongs to the zinc-containing alcohol dehydrogenase family. Homotetramer. Zn(2+) is required as a cofactor.

It carries out the reaction keto-D-fructose + NADH + H(+) = D-sorbitol + NAD(+). The enzyme catalyses xylitol + NAD(+) = D-xylulose + NADH + H(+). Polyol dehydrogenase that catalyzes the reversible NAD(+)-dependent oxidation of various sugar alcohols. Is active with D-sorbitol (D-glucitol) and xylitol as substrates, leading to the C2-oxidized product D-fructose and D-xylulose, respectively. Is likely involved in the utilization of D-sorbitol as a sole carbon source for growth. Has no activity on mannitol and primary alcohols such as ethanol. This chain is Sorbitol dehydrogenase 1 (SOR1), found in Saccharomyces cerevisiae (strain ATCC 204508 / S288c) (Baker's yeast).